Here is a 424-residue protein sequence, read N- to C-terminus: Adenylosuccinate synthetase (424 aa).

Residues 11 to 17 and 39 to 41 each bind GTP; these read GDEGKGK and GHT. Residue Asp-12 is the Proton acceptor of the active site. Positions 12 and 39 each coordinate Mg(2+). IMP-binding positions include 12 to 15, 37 to 40, Thr-127, Arg-141, Gln-223, Thr-238, and Arg-302; these read DEGK and NAGH. His-40 acts as the Proton donor in catalysis. 298 to 304 contributes to the substrate binding site; sequence TTTGRGR. Residues Arg-304, 330–332, and 412–414 each bind GTP; these read KLD and SVG.

It belongs to the adenylosuccinate synthetase family. In terms of assembly, homodimer. It depends on Mg(2+) as a cofactor.

Its subcellular location is the cytoplasm. It carries out the reaction IMP + L-aspartate + GTP = N(6)-(1,2-dicarboxyethyl)-AMP + GDP + phosphate + 2 H(+). It functions in the pathway purine metabolism; AMP biosynthesis via de novo pathway; AMP from IMP: step 1/2. Plays an important role in the de novo pathway of purine nucleotide biosynthesis. Catalyzes the first committed step in the biosynthesis of AMP from IMP. The sequence is that of Adenylosuccinate synthetase from Methanosarcina barkeri (strain Fusaro / DSM 804).